A 304-amino-acid chain; its full sequence is MQPIRLGLVGYGKIAQDQHVPAINANPAFTLVSVATQGKPCPGVENFQSLGELLENGPPVDAIAFCTPPQGRFALVQQALAAGKHVLVEKPPCATLGKAALWIKREQASAPCSPCIAYAPAIAAARDWLATRTLQSVQIDWKEDVRKWHPGQAWIWQPGLGVFDPGINALSIVTHLLPLPLFVESAELRVPSNCQSPIAASIKMSDPRLLDVRAEFDFDHGHDELWSIQIRCAEGTLRLDNGGALLSIDGVRQTVAEEGEYAAVYRHFQQLIGDKTSDVDVQPLRLVADSFFVGSRVSVEAFYD.

The protein belongs to the Gfo/Idh/MocA family. As to quaternary structure, homodimer.

It localises to the cytoplasm. It carries out the reaction D-galactose + NAD(+) = D-galactono-1,4-lactone + NADH + H(+). It participates in carbohydrate metabolism; galactose metabolism. Functionally, catalyzes the dehydrogenation of D-galactose by either NAD(+) or NADP(+). Oxidizes following sugars in decreasing order: D-fucose &gt; D-galactose &gt; L-arabinose &gt; 2-deoxy-D-galactose &gt;&gt; 4-deoxy-D-galactose &gt; 2-deoxy-2-amino-D-galactose. This is Galactose 1-dehydrogenase (gal) from Pseudomonas fluorescens.